Reading from the N-terminus, the 353-residue chain is MGCCSSDCFVYFILSIALAFMAISTTLRSPPDSEPTIPIAFSSSSPSLSLNASNTLRQSNFKAIATLLHISPEIFLSSSPNTTLFAIEDASFFNTSSLHPLFLKQLLHYHTLPLMLSMDDLLKKPQGTCLPTLLHHKSVQISTVNQESRTAEVNHVRITHPDMFLGDSLVIHGVIGPFSPLQPHSDHLIHTPLCQSDTTNKTSNNEEVPVSIDWTRIVQLLSSNGFVPFAIGLHSVLNRIVNDHNHHKNLTGVTILATPNLVSLSSASPFLYEVVRHHILVQRLTYKDFASMSDKATVKTLDPYQDLTITRRNVNSSGGDFMISGVEIVDPDMFSSSNFVIHGISHTLEIPHV.

Positions Met1–Arg28 are cleaved as a signal peptide. Residues Asn51, Asn81, Asn94, Asn200, Asn249, and Asn315 are each glycosylated (N-linked (GlcNAc...) asparagine). The FAS1 1 domain occupies Thr83–Leu181. Positions Thr254–His352 constitute an FAS1 2 domain.

It belongs to the fasciclin-like AGP family.

The protein resides in the secreted. Its function is as follows. May be a cell surface adhesion protein. The protein is Fasciclin-like arabinogalactan protein 21 (FLA21) of Arabidopsis thaliana (Mouse-ear cress).